We begin with the raw amino-acid sequence, 115 residues long: Probable non-functional T cell receptor beta variable 23-1 (115 aa).

The first 21 residues, 1 to 21 (MGTRLLGCAALCLLAADSFHA), serve as a signal peptide directing secretion. The region spanning 22–115 (KVTQTPGHLV…TALYLCASSQ (94 aa)) is the Ig-like domain. A disulfide bridge links Cys42 with Cys111.

Alpha-beta TR is a heterodimer composed of an alpha and beta chain; disulfide-linked. The alpha-beta TR is associated with the transmembrane signaling CD3 coreceptor proteins to form the TR-CD3 (TcR or TCR). The assembly of alpha-beta TR heterodimers with CD3 occurs in the endoplasmic reticulum where a single alpha-beta TR heterodimer associates with one CD3D-CD3E heterodimer, one CD3G-CD3E heterodimer and one CD247 homodimer forming a stable octameric structure. CD3D-CD3E and CD3G-CD3E heterodimers preferentially associate with TR alpha and TR beta chains, respectively. The association of the CD247 homodimer is the last step of TcR assembly in the endoplasmic reticulum and is required for transport to the cell surface.

The protein resides in the cell membrane. Functionally, probable non-functional open reading frame (ORF) of V region of the variable domain of T cell receptor (TR) beta chain. Non-functional ORF generally cannot participate in the synthesis of a productive T cell receptor (TR) chain due to altered V-(D)-J or switch recombination and/or splicing site (at mRNA level) and/or conserved amino acid change (protein level). Alpha-beta T cell receptors are antigen specific receptors which are essential to the immune response and are present on the cell surface of T lymphocytes. Recognize peptide-major histocompatibility (MH) (pMH) complexes that are displayed by antigen presenting cells (APC), a prerequisite for efficient T cell adaptive immunity against pathogens. Binding of alpha-beta TR to pMH complex initiates TR-CD3 clustering on the cell surface and intracellular activation of LCK that phosphorylates the ITAM motifs of CD3G, CD3D, CD3E and CD247 enabling the recruitment of ZAP70. In turn ZAP70 phosphorylates LAT, which recruits numerous signaling molecules to form the LAT signalosome. The LAT signalosome propagates signal branching to three major signaling pathways, the calcium, the mitogen-activated protein kinase (MAPK) kinase and the nuclear factor NF-kappa-B (NF-kB) pathways, leading to the mobilization of transcription factors that are critical for gene expression and essential for T cell growth and differentiation. The T cell repertoire is generated in the thymus, by V-(D)-J rearrangement. This repertoire is then shaped by intrathymic selection events to generate a peripheral T cell pool of self-MH restricted, non-autoaggressive T cells. Post-thymic interaction of alpha-beta TR with the pMH complexes shapes TR structural and functional avidity. In Homo sapiens (Human), this protein is Probable non-functional T cell receptor beta variable 23-1.